A 3005-amino-acid chain; its full sequence is MDPQQRLLLETTYEALENAGIPQANTNGSNTSVHVAMFTRDYDRNVYKDTVGIPKYQVTGTGEAIMSNRISHIFNLHGPSMTIDTGCSGAMTAVSQACMSLRSGDCDIALAGAVNLIMSPDHHISMSNLHMLNAEGKSYAFDSRGAGYGRGEGVATIVMKRLDDAVRCHDPIRAVILDAVINQDGYTAGITLPSSEAQAQLERKALNRVGLKPQEVAYIEAHGTGTAAGDAAELDALSSVFCVDRDLPLYVGSVKSNIGHLEAASGMAALIKATLMLENEAIPPSINFSRPKENLRIDERNIKIPTALQPWPKGASARICVNSFGYGGTNAHAILERAPERPTVMGPKNTPYLFLLSAKSRASLSRTVKNIKEWISSQHDTLSLRDLSYTLNQRRSMMSWRFGGVATTHQELLDVLTQELKSSSAVRTPTRANINFVFTGQGAQWPGMGRELLVVRAFKDSLNQSRNVLHQLGASWDLFDELVRDKESSRLKEPQLSQPVTTAIQIALVETFRSFGISPGAVVGHSSGEIAAAYTAGYLSHDTAIKIAYYRGFSAEIAKAKGMENGAMLATDLGEATAREYVAKLVKGKATVACQNSPNSSTLSGDTTAVSELEEMLSKDSVFNRRLQVDAAYHSHHMEAAAEEYEKSLGDVCVEQPLTKVRFFSSVVGREVWEGFDSTYWTTNLTSTVRYCDALQALCRTQFAQPQGEQSHQLFVEIGPHNALAGPTRQSISDLDKQSTYSYMSALVRGSGGVGTILGVLSELIKHGHHVDLAALRTLDPTCQEANVLHDLPSYAWDHSKRFWNESRLSREYRLRKHPYHDLLGLKMTDHTPLRPSWRYLVGVEGLPWLKDHIVDGTIIFPGSGYLCMVMEAAETSFTKALIIPESPSRVELQLNFCPVGPTNGNAFHFVITAVSAAGIWAEHCKGSVEVKYAAANRPRKALDIPVTFDQISEGLDVESEAIEKISSQELYDELSAVGNTYGPMFRGINKAIIQADRSASFISIPDVTRMMPAQYMRPHFIHPTTLDILLHSSLPLVNRQVGQASIMPVRIDELALSTLIQNESGSSLAAITTLTSADLRGGDADILVFSDSGDATDRPVMSVSGLELRRLAPTGQPATSGTARDICYEMKWDADVEFISAEFLRPQKLPPSVKQKWDVIDRATDIYIQRCLQHLGKRALDASGDHHKLLVKWMNSTVAKTQTCEDPTEAKILEMSSSQGVEGEFLARLGPALPEIITGKVNPLQLMLEDGLLYRVYADDSSKRCYDLMAGYLNSKSFKQSGFAVLEIGAGTGGATLPFLQSLDHNGNRPVVFDFTDISAGLFESAKERLQDWSDVVNFRTLDIEKNPKDQGFTEGFYDIILACNVLHATSSVDSTLSKVRQLLKPEGVLLLLEVTKPRHYHNVTFGTLPGWWKGVNDSRAAGPLLSPEGWSTRMRKASLNMQLAVYDDNETPISSLIVAKPIQEVTKKKQVQIVLDSSVPIWLRKFADQVLSRLAAEEFGVSLTSWDEMTVNPHDSSIWLVIDNGEHPVLSHVTPIQLQSVTEMLKAPSHVLWISVVHDPQFSENPFKHLITGISRTAHAENDRLKMITVDVQQSICQEEGKEEGNRFMSFLMGVVISLSKADLLTIEREYVYKNGQVNIPRVLPSPDIQGWMPGNVTGLPEMKPFHDSQKAWILDIERSEFMKMPVFTENDAFRESLDENEIEIDVEAIGVPELLIRHSINGFAGRVIAIRSKVDGIKVKDNIVAFAASSYPNRLRVHQSQARVVPQGVSSRIAAALLIPLMAVSHALVNIASTNSPIVLIHGATGTIAQSSVAIAKALGSVIIQTVSGDVESPALDDVVSTFADHVVPDQGYSSKHQLQKVLRQRKVDVILSFSKNRVSKEVAGTLKPFGHCIHIENGPKPSLQIEQSQYLSNATISRFRMDAVVRAQPEAVAFAFSTVIDALGSSKMDSKAVNVVSRPVGELDRLFKQEYQHHRNESTVLHVDDCLVRVWSSEKRSLSLDSDATYVVSGGRGDLGKRFIRLMCAAGARHFVTLSRGVSSSHTQLTSLQTELQENVRNDCVLQDIQCNIADLNEVQNALAIIKTQGLPPVRGIIQAAVALEDSTMNSITSDSFNRVLGAKAHGTMNLRNTFAPEGLAFFISLSSAVTVIGTSGQSSYNAENSVQDALAQFSNRDGCHYMSLNVGTIEGADATADNQTRVQALRRQGLISITPDELLGFFRYSVTSEARKGHRCRQAIIGFTPESLSLTTAANGTVHSPMFTHVRERGDRKTSEKRSGAKKTFKATIQETRDFEKISQLMALWIGEKVANLVAADASEVDLGSSIADFYVDSLIIIELRNWINRELQASIFIPETMESQNLLSLGAKVASRSALVPSSISSKVSNSNDEALSIDSTASLSLAPSSQPPEMLETPYAQLQHLPAADLHTALDMLIESRKGFCTQAELEETLRASAEWRGVEKADRDAIVSKFTGSNLRLESYEKALHLERREPLQDHAVFYLGHITDQVPDHTQAERAAIIVHSTLSFKHQLEMGVLEQNSLNGSPLCMSTLQWLFHATQEPRHELDVMKKYRASGNVAIMRRGHIFVATVHDDDGLAALVALFEDVIQHSEDAIPALSILTSHRRDDWAQLKGSLESITGNAAKLEAIQSAAFVICLDEGAPTNPGERATSQLLNDRHLSNRWLDKTLQFSVAANGVSSLIGLNSTLDGLSVKQLHEAITEQILASTRGHMDILHQDHERRPAKRLSVFRELGFEIPPPITTAIEEKRLRNLAHYPSVAAFSQHYADLNRTFLGTRRLRSKGTVLMAIVFAIRLFYGRFEPVWETVTLAKYARGRTDWLQIVTPDVMEWIESAIQRNSGGKSTICGRDMLVQLQASTTKHTQNVRQVADSRGFVEPLYAFQAFIESEGRKLPRLFKSEAWKHSDRNATPKLVKTDCLGSGGWLRMQEAGFLMPHPNSLFIHYEVHHTDPLVLVQGRDRDVAKFSGCLNEAVKAMRTIIEQSS.

The Ketosynthase family 3 (KS3) domain maps to Met-1–Arg-337. Active-site for beta-ketoacyl synthase activity residues include Cys-87, His-222, and His-260. Positions Val-437–Ser-751 are malonyl-CoA:ACP transacylase (MAT) domain. Residues His-821 to Ala-936 are N-terminal hotdog fold. The interval His-821–Pro-1114 is dehydratase (DH) domain. Residues His-821–Pro-1118 enclose the PKS/mFAS DH domain. Catalysis depends on His-853, which acts as the Proton acceptor; for dehydratase activity. The tract at residues Ile-963–Pro-1118 is C-terminal hotdog fold. Catalysis depends on Asp-1028, which acts as the Proton donor; for dehydratase activity. Residues Ala-1259–Leu-1445 form a methyltransferase (CMet) domain region. The enoyl reductase (ER) (ER) domain stretch occupies residues Glu-1683–Leu-1985. A ketoreductase (KR) domain region spans residues Ala-2008–Glu-2191. Positions Thr-2293–Ser-2375 constitute a Carrier domain. Ser-2335 bears the O-(pantetheine 4'-phosphoryl)serine mark.

It functions in the pathway mycotoxin biosynthesis. In terms of biological role, highly reducing polyketide synthase; part of the gene clusters that mediate the biosynthesis of the host-selective toxins (HSTs) AF-toxins responsible for Alternaria black spot of strawberry disease by the strawberry pathotype. AF-toxin I and III are valine derivatives of 2,3-dyhydroxy-isovaleric acid and 2-hydroxy-isovaleric acid respectively, while AF II is an isoleucine derivative of 2-hydroxy-valeric acid. These derivatives are bound to a 9,10-epoxy-8-hydroxy-9-methyl-decatrienoic acid (EDA) moiety. On cellular level, AF-toxins affect plasma membrane of susceptible cells and cause a sudden increase in loss of K(+) after a few minutes of toxin treatment. The aldo-keto reductase AFTS1 catalyzes the conversion of 2-keto-isovaleric acid (2-KIV) to 2-hydroxy-isovaleric acid (2-HIV) by reduction of its ketone to an alcohol. The acyl-CoA ligase AFT1, the hydrolase AFT2 and the enoyl-CoA hydratases AFT3 and AFT6, but also the polyketide synthase AFT9, the acyl-CoA dehydrogenase AFT10, the cytochrome P450 monooxygenase AFT11 and the oxidoreductase AFT12 are all involved in the biosynthesis of the AK-, AF- and ACT-toxin common EDA structural moiety. The exact function of each enzyme, and of additional enzymes identified within the AF-toxin clusters have still to be determined. This chain is Highly reducing polyketide synthase AFT9-1, found in Alternaria alternata (Alternaria rot fungus).